The chain runs to 127 residues: Major sperm protein 38 (127 aa).

Alanine 2 is subject to N-acetylalanine. The 118-residue stretch at aspartate 9–asparagine 126 folds into the MSP domain.

As to expression, sperm.

It is found in the cell projection. Its subcellular location is the pseudopodium. It localises to the cytoplasm. The protein localises to the cytoskeleton. Its function is as follows. Central component in molecular interactions underlying sperm crawling. Forms an extensive filament system that extends from sperm villipoda, along the leading edge of the pseudopod. The chain is Major sperm protein 38 (msp-38) from Caenorhabditis elegans.